A 1034-amino-acid polypeptide reads, in one-letter code: Enteropeptidase (1034 aa).

Residues 1-51 constitute a propeptide that is removed on maturation; sequence MGSKRIIPSRHRSLSTYEVMFTALFAILMVLCAGLIAVSWLTIKGSEKDAA. Topologically, residues 2–18 are cytoplasmic; sequence GSKRIIPSRHRSLSTYE. Residues 19–47 form a helical; Signal-anchor for type II membrane protein membrane-spanning segment; sequence VMFTALFAILMVLCAGLIAVSWLTIKGSE. Residues 48-1034 lie on the Extracellular side of the membrane; the sequence is KDAALGKSHE…FTEWIQSFLH (987 aa). Residues 54-169 enclose the SEA domain; the sequence is KSHEARGTMK…NSIDITESLE (116 aa). 4 N-linked (GlcNAc...) asparagine glycosylation sites follow: asparagine 116, asparagine 147, asparagine 170, and asparagine 194. The LDL-receptor class A 1 domain maps to 197–238; that stretch reads IECLPGSRPCADALKCIAVDLFCDGELNCPDGSDEDSKICAT. Cystine bridges form between cysteine 199/cysteine 212, cysteine 206/cysteine 225, cysteine 219/cysteine 236, and cysteine 240/cysteine 268. The CUB 1 domain occupies 240-349; the sequence is CDGKFLLTES…IGFNATYTAF (110 aa). N-linked (GlcNAc...) asparagine glycosylation is found at asparagine 283, asparagine 343, asparagine 350, asparagine 403, asparagine 455, asparagine 485, asparagine 518, asparagine 549, and asparagine 645. The MAM domain occupies 357–519; it reads DEKINCNFED…ISLTYGICNV (163 aa). A disulfide bridge connects residues cysteine 539 and cysteine 567. The CUB 2 domain occupies 539–649; sequence CGGPFELWEP…GGFKANFTTG (111 aa). An LDL-receptor class A 2 domain is found at 656–694; it reads EPCKEDNFQCENGECVLLVNLCDGFSHCKDGSDEAHCVR. 3 disulfide bridges follow: cysteine 658–cysteine 670, cysteine 665–cysteine 683, and cysteine 677–cysteine 692. The SRCR domain occupies 693–786; the sequence is VRFLNGTANN…LILLQCNHKS (94 aa). Residues asparagine 697, asparagine 701, asparagine 721, asparagine 740, and asparagine 761 are each glycosylated (N-linked (GlcNAc...) asparagine). Disulfide bonds link cysteine 772/cysteine 782, cysteine 787/cysteine 911, cysteine 825/cysteine 841, cysteine 925/cysteine 992, cysteine 956/cysteine 971, and cysteine 982/cysteine 1010. The Peptidase S1 domain occupies 800 to 1034; sequence IVGGNDSREG…FTEWIQSFLH (235 aa). N-linked (GlcNAc...) asparagine glycosylation is present at asparagine 804. Histidine 840 serves as the catalytic Charge relay system. A glycan (N-linked (GlcNAc...) asparagine) is linked at asparagine 863. Catalysis depends on aspartate 891, which acts as the Charge relay system. N-linked (GlcNAc...) asparagine glycosylation is found at asparagine 902 and asparagine 964. Serine 986 serves as the catalytic Charge relay system.

The protein belongs to the peptidase S1 family. In terms of assembly, heterotrimer of a catalytic (light) chain, a multidomain (heavy) chain, and a mini chain. Post-translationally, the chains are derived from a single precursor that is cleaved by a trypsin-like protease. The mini chain may be cleaved by elastase.

It is found in the membrane. The enzyme catalyses Activation of trypsinogen by selective cleavage of 6-Lys-|-Ile-7 bond.. In terms of biological role, responsible for initiating activation of pancreatic proteolytic proenzymes (trypsin, chymotrypsin and carboxypeptidase A). It catalyzes the conversion of trypsinogen to trypsin which in turn activates other proenzymes including chymotrypsinogen, procarboxypeptidases, and proelastases. The polypeptide is Enteropeptidase (TMPRSS15) (Sus scrofa (Pig)).